The sequence spans 454 residues: uncharacterized protein (454 aa).

Residues Cys73, Cys79, Cys82, and Cys154 each contribute to the [4Fe-4S] cluster site. S-adenosyl-L-methionine contacts are provided by Gln279, Phe307, Asp328, and Asp381. Residue Cys408 is the Nucleophile of the active site.

Belongs to the class I-like SAM-binding methyltransferase superfamily. RNA M5U methyltransferase family.

This is an uncharacterized protein from Leptospira interrogans serogroup Icterohaemorrhagiae serovar Lai (strain 56601).